We begin with the raw amino-acid sequence, 873 residues long: Tyrosine-protein kinase receptor TYRO3 (873 aa).

Residues 1–28 form the signal peptide; sequence MELRRSMALPRLLLLGLWAAALRDGAVA. Ig-like C2-type domains are found at residues 29-116 and 127-208; these read AGMK…KEES and PYFT…ATVQ. At 29–416 the chain is on the extracellular side; the sequence is AGMKFTGSPI…QRQPPYGTSW (388 aa). Asparagine 51 carries an N-linked (GlcNAc...) asparagine glycan. 2 cysteine pairs are disulfide-bonded: cysteine 52-cysteine 105 and cysteine 148-cysteine 191. N-linked (GlcNAc...) asparagine glycans are attached at residues asparagine 179, asparagine 184, asparagine 218, asparagine 228, asparagine 281, asparagine 353, and asparagine 367. Fibronectin type-III domains are found at residues 215–308 and 310–403; these read PPLN…TLEL and PSST…AQEV. Residues 417–437 form a helical membrane-spanning segment; it reads VPVALGILTALVTAVALALIL. Over 438–873 the chain is Cytoplasmic; the sequence is LRKRRKETRF…ELETEGEKSC (436 aa). The region spanning 505-776 is the Protein kinase domain; that stretch reads FTLGRMLGKG…GVLRSQLEMI (272 aa). Residues 511 to 519 and lysine 537 contribute to the ATP site; that span reads LGKGEFGSV. Residue aspartate 642 is the Proton acceptor of the active site. At tyrosine 673 the chain carries Phosphotyrosine; by autocatalysis. The tract at residues 845–873 is disordered; that stretch reads VEGERHPEGQEGENKSLLYELETEGEKSC. Residues 847–858 show a composition bias toward basic and acidic residues; that stretch reads GERHPEGQEGEN.

This sequence belongs to the protein kinase superfamily. Tyr protein kinase family. AXL/UFO subfamily. Autophosphorylated on tyrosine residues. In terms of tissue distribution, detected in embryonic retina (at protein level). detected in brain, retina, kidney and in retinal Mueller glia-like cells.

Its subcellular location is the cell membrane. The enzyme catalyses L-tyrosyl-[protein] + ATP = O-phospho-L-tyrosyl-[protein] + ADP + H(+). Its function is as follows. Receptor tyrosine kinase that transduces signals from the extracellular matrix into the cytoplasm by binding to several ligands. Regulates many physiological processes including cell survival, migration and differentiation. Ligand binding at the cell surface induces dimerization and autophosphorylation of TYRO3 on its intracellular domain that provides docking sites for downstream signaling molecules. Following activation by ligand, enhances PI3-kinase activity and activates the AKT survival pathway, including nuclear translocation of NF-kappa-B and up-regulation of transcription of NF-kappa-B-regulated genes. The chain is Tyrosine-protein kinase receptor TYRO3 (TYRO3) from Gallus gallus (Chicken).